A 229-amino-acid polypeptide reads, in one-letter code: Ribonuclease 3 (229 aa).

The 123-residue stretch at 5-127 folds into the RNase III domain; it reads LSRLERKLGH…LIGAIYLDAG (123 aa). Residue E40 participates in Mg(2+) binding. D44 is a catalytic residue. Positions 113 and 116 each coordinate Mg(2+). E116 is an active-site residue. In terms of domain architecture, DRBM spans 154–224; sequence DPKTRLQEFL…AAAALIALGV (71 aa).

This sequence belongs to the ribonuclease III family. As to quaternary structure, homodimer. Mg(2+) serves as cofactor.

Its subcellular location is the cytoplasm. It catalyses the reaction Endonucleolytic cleavage to 5'-phosphomonoester.. Functionally, digests double-stranded RNA. Involved in the processing of primary rRNA transcript to yield the immediate precursors to the large and small rRNAs (23S and 16S). Processes some mRNAs, and tRNAs when they are encoded in the rRNA operon. Processes pre-crRNA and tracrRNA of type II CRISPR loci if present in the organism. The protein is Ribonuclease 3 of Ectopseudomonas mendocina (strain ymp) (Pseudomonas mendocina).